The following is a 439-amino-acid chain: Histidinol dehydrogenase (439 aa).

Tyrosine 127, glutamine 185, and asparagine 208 together coordinate NAD(+). Residues serine 234, glutamine 256, and histidine 259 each coordinate substrate. Glutamine 256 and histidine 259 together coordinate Zn(2+). Residues glutamate 323 and histidine 324 each act as proton acceptor in the active site. Substrate is bound by residues histidine 324, aspartate 357, glutamate 411, and histidine 416. Residue aspartate 357 participates in Zn(2+) binding. Histidine 416 serves as a coordination point for Zn(2+).

It belongs to the histidinol dehydrogenase family. Zn(2+) is required as a cofactor.

It catalyses the reaction L-histidinol + 2 NAD(+) + H2O = L-histidine + 2 NADH + 3 H(+). Its pathway is amino-acid biosynthesis; L-histidine biosynthesis; L-histidine from 5-phospho-alpha-D-ribose 1-diphosphate: step 9/9. Its function is as follows. Catalyzes the sequential NAD-dependent oxidations of L-histidinol to L-histidinaldehyde and then to L-histidine. This chain is Histidinol dehydrogenase, found in Aliivibrio fischeri (strain ATCC 700601 / ES114) (Vibrio fischeri).